We begin with the raw amino-acid sequence, 195 residues long: dCTP deaminase (195 aa).

DCTP-binding positions include 109-114 (RSSLAR), Asp127, 135-137 (TLE), Tyr170, Lys177, and Gln181. The active-site Proton donor/acceptor is Glu137.

It belongs to the dCTP deaminase family. In terms of assembly, homotrimer.

It catalyses the reaction dCTP + H2O + H(+) = dUTP + NH4(+). The protein operates within pyrimidine metabolism; dUMP biosynthesis; dUMP from dCTP (dUTP route): step 1/2. In terms of biological role, catalyzes the deamination of dCTP to dUTP. The protein is dCTP deaminase of Rhodospirillum rubrum (strain ATCC 11170 / ATH 1.1.1 / DSM 467 / LMG 4362 / NCIMB 8255 / S1).